The primary structure comprises 847 residues: Alanine--tRNA ligase (847 aa).

Zn(2+) contacts are provided by H554, H558, C656, and H660.

This sequence belongs to the class-II aminoacyl-tRNA synthetase family. The cofactor is Zn(2+).

It is found in the cytoplasm. The enzyme catalyses tRNA(Ala) + L-alanine + ATP = L-alanyl-tRNA(Ala) + AMP + diphosphate. Catalyzes the attachment of alanine to tRNA(Ala) in a two-step reaction: alanine is first activated by ATP to form Ala-AMP and then transferred to the acceptor end of tRNA(Ala). Also edits incorrectly charged Ser-tRNA(Ala) and Gly-tRNA(Ala) via its editing domain. The chain is Alanine--tRNA ligase from Helicobacter pylori (strain ATCC 700392 / 26695) (Campylobacter pylori).